A 154-amino-acid polypeptide reads, in one-letter code: Aspartate carbamoyltransferase regulatory chain (154 aa).

The Zn(2+) site is built by C109, C114, C138, and C141.

This sequence belongs to the PyrI family. Contains catalytic and regulatory chains. The cofactor is Zn(2+).

Involved in allosteric regulation of aspartate carbamoyltransferase. The protein is Aspartate carbamoyltransferase regulatory chain of Aliivibrio salmonicida (strain LFI1238) (Vibrio salmonicida (strain LFI1238)).